Consider the following 511-residue polypeptide: Putative polyol transporter 2 (511 aa).

The next 12 helical transmembrane spans lie at 25–45 (FAFA…YDIG), 63–83 (VQLE…SGAA), 94–114 (YTIV…GFAT), 117–137 (PFIM…MMIA), 156–176 (FPEI…YFFA), 186–206 (FMLG…LAMP), 284–304 (ILIA…DAVV), 324–344 (LATV…TCLV), 351–371 (ALLL…GTSL), 384–404 (WAIG…SLGA), 424–444 (GASL…MTFL), and 454–474 (GAFL…FTFL).

It belongs to the major facilitator superfamily. Sugar transporter (TC 2.A.1.1) family.

It is found in the membrane. Its function is as follows. Plasma membrane sugar-proton symporter. The chain is Putative polyol transporter 2 (PLT2) from Arabidopsis thaliana (Mouse-ear cress).